Consider the following 120-residue polypeptide: T-cell receptor beta chain V region PHDS203 (120 aa).

The N-terminal stretch at 1–11 is a signal peptide; that stretch reads VVLCFLGTGLV. The v segment stretch occupies residues 12–106; the sequence is DMKVTQMSRY…TSVYFCAQGA (95 aa). Cysteine 34 and cysteine 102 are disulfide-bonded. Positions 107–120 are j segment; the sequence is PEQYFGPGTRLTVL.

The sequence is that of T-cell receptor beta chain V region PHDS203 from Mus musculus (Mouse).